We begin with the raw amino-acid sequence, 847 residues long: Histidine decarboxylase (847 aa).

The substrate site is built by Phe-80 and His-193. Lys-304 carries the N6-(pyridoxal phosphate)lysine modification. Polar residues predominate over residues 575 to 605 (GNGATRTSTTNSYGHTTSAAQANSERQASIQ). 3 disordered regions span residues 575–662 (GNGA…RSSP), 769–798 (QSQS…MSSL), and 813–847 (SQPM…MESL). Positions 606–616 (EDNEESPEETE) are enriched in acidic residues. 2 stretches are compositionally biased toward low complexity: residues 634 to 657 (SLST…TQSS) and 769 to 787 (QSQS…LSGG). Positions 832–847 (DSDATVCSTTSSMESL) are enriched in polar residues.

Belongs to the group II decarboxylase family. In terms of assembly, homodimer. It depends on pyridoxal 5'-phosphate as a cofactor. In terms of tissue distribution, localized primarily to the photoreceptors, in the eye.

The catalysed reaction is L-histidine + H(+) = histamine + CO2. Its function is as follows. Required in photoreceptor transmitter synthesis. Catlayzes the conversion of L-histidine to histamine. The polypeptide is Histidine decarboxylase (Hdc) (Drosophila melanogaster (Fruit fly)).